We begin with the raw amino-acid sequence, 253 residues long: Triosephosphate isomerase (253 aa).

9 to 11 contacts substrate; it reads NWK. H95 serves as the catalytic Electrophile. The active-site Proton acceptor is the E167. Residues G173, S213, and 234 to 235 contribute to the substrate site; that span reads GG. S213 bears the Phosphoserine mark.

Belongs to the triosephosphate isomerase family. As to quaternary structure, homodimer.

Its subcellular location is the cytoplasm. The enzyme catalyses D-glyceraldehyde 3-phosphate = dihydroxyacetone phosphate. Its pathway is carbohydrate biosynthesis; gluconeogenesis. The protein operates within carbohydrate degradation; glycolysis; D-glyceraldehyde 3-phosphate from glycerone phosphate: step 1/1. Its function is as follows. Involved in the gluconeogenesis. Catalyzes stereospecifically the conversion of dihydroxyacetone phosphate (DHAP) to D-glyceraldehyde-3-phosphate (G3P). The protein is Triosephosphate isomerase of Lysinibacillus sphaericus (strain C3-41).